The following is a 451-amino-acid chain: MEKLLGYRDLNMTPREIVEELDRHIIGQKHAKRAVANALRSRWRRKQVAEPLRSEITPKNILMIGPTGVGKTEIARRLAKLAEAPFIKVEATKFTEVGYVGRDVDSIIRDLVETSIKLEKNRAKERVKSKAREAALERVLDVLVPRKKQTAWTGEEEIDPARKMYRERILREEMNDTVIEIETNQSMSANVEIMTPPGMEEMSSQLSEMFKSFGREKKTKRKMTIAKALIQLAEEEAEALVSHEEIKSAAIDNAEQNGIVFIDEIDKVARRSDVGGADVSREGVQRDLLPLVEGCTISTKYGMIKTDHILFIASGAFHLAKPSDLIPELQGRLPVRVELDALTADDFKRILTEPDASLIKQYTALFATEQLHLEFTEDGINKIAEIAYHVNKTTENIGARRLHTLIERLTDSLSFDAADRRDGDRVIIDAAYVEKTLGEISNNEDLSRFIL.

ATP-binding positions include isoleucine 26, 68–73 (GVGKTE), aspartate 263, glutamate 328, and arginine 400.

It belongs to the ClpX chaperone family. HslU subfamily. In terms of assembly, a double ring-shaped homohexamer of HslV is capped on each side by a ring-shaped HslU homohexamer. The assembly of the HslU/HslV complex is dependent on binding of ATP.

Its subcellular location is the cytoplasm. Functionally, ATPase subunit of a proteasome-like degradation complex; this subunit has chaperone activity. The binding of ATP and its subsequent hydrolysis by HslU are essential for unfolding of protein substrates subsequently hydrolyzed by HslV. HslU recognizes the N-terminal part of its protein substrates and unfolds these before they are guided to HslV for hydrolysis. The sequence is that of ATP-dependent protease ATPase subunit HslU from Dichelobacter nodosus (strain VCS1703A).